We begin with the raw amino-acid sequence, 431 residues long: Growth-regulating factor 9 (431 aa).

Positions 24 to 59 constitute a QLQ domain; that stretch reads WMKAAQLMEFRMQALVYRYIEAGLRVPHHLVVPIWN. WRC domains are found at residues 89-133 and 307-351; these read ETEP…LVES and DNEP…VDTT. 4 short sequence motifs (bipartite nuclear localization signal) span residues 94-104, 122-129, 312-322, and 340-345; these read RCRRTDGKKWR, RGRKRSRK, and RGMKKK.

Belongs to the GRF family. Interacts with GIF1. In terms of tissue distribution, detected in the shoot apical meristem (SAM) and in young leaf primordium.

The protein localises to the nucleus. Functionally, transcription activator that plays a role in the regulation of cell expansion in leaf and cotyledons tissues. Component of a network formed by miR396, the GRFs and their interacting factors (GIFs) acting in the regulation of meristem function, at least partially through the control of cell proliferation. The chain is Growth-regulating factor 9 (GRF9) from Arabidopsis thaliana (Mouse-ear cress).